The following is a 148-amino-acid chain: SsrA-binding protein (148 aa).

The segment covering 127 to 142 (KRESEKERDWERDKAR) has biased composition (basic and acidic residues). The disordered stretch occupies residues 127–148 (KRESEKERDWERDKARLMRVKT).

Belongs to the SmpB family.

The protein resides in the cytoplasm. In terms of biological role, required for rescue of stalled ribosomes mediated by trans-translation. Binds to transfer-messenger RNA (tmRNA), required for stable association of tmRNA with ribosomes. tmRNA and SmpB together mimic tRNA shape, replacing the anticodon stem-loop with SmpB. tmRNA is encoded by the ssrA gene; the 2 termini fold to resemble tRNA(Ala) and it encodes a 'tag peptide', a short internal open reading frame. During trans-translation Ala-aminoacylated tmRNA acts like a tRNA, entering the A-site of stalled ribosomes, displacing the stalled mRNA. The ribosome then switches to translate the ORF on the tmRNA; the nascent peptide is terminated with the 'tag peptide' encoded by the tmRNA and targeted for degradation. The ribosome is freed to recommence translation, which seems to be the essential function of trans-translation. The polypeptide is SsrA-binding protein (Aromatoleum aromaticum (strain DSM 19018 / LMG 30748 / EbN1) (Azoarcus sp. (strain EbN1))).